The primary structure comprises 416 residues: GTPase Obg (416 aa).

An Obg domain is found at 1-157; the sequence is MFQDVLVITV…RRLRLELMLI (157 aa). Disordered stretches follow at residues 25-44 and 62-82; these read EKFV…GGSV and TYKA…RGGE. Positions 32-42 are enriched in gly residues; it reads GPDGGDGGRGG. The segment covering 63-72 has biased composition (basic and acidic residues); that stretch reads YKAEDGEHGR. The OBG-type G domain maps to 158-324; it reads ADVGLVGYPN…LKEALHALVR (167 aa). Residues 164–171, 189–193, 211–214, 277–280, and 305–307 each bind GTP; these read GYPNAGKS, FTTLS, DIPG, NKVD, and SAL. Mg(2+) is bound by residues S171 and T191. The OCT domain occupies 336 to 414; sequence PRKEVQAGVE…IGGLEFEYIP (79 aa).

Belongs to the TRAFAC class OBG-HflX-like GTPase superfamily. OBG GTPase family. As to quaternary structure, monomer. The cofactor is Mg(2+).

The protein resides in the cytoplasm. An essential GTPase which binds GTP, GDP and possibly (p)ppGpp with moderate affinity, with high nucleotide exchange rates and a fairly low GTP hydrolysis rate. Plays a role in control of the cell cycle, stress response, ribosome biogenesis and in those bacteria that undergo differentiation, in morphogenesis control. The sequence is that of GTPase Obg from Thermus thermophilus (strain ATCC 27634 / DSM 579 / HB8).